We begin with the raw amino-acid sequence, 333 residues long: Diaminopimelate epimerase (333 aa).

2 residues coordinate substrate: Asn-24 and Asn-79. Catalysis depends on Cys-88, which acts as the Proton donor. Residues 89–90, Asn-176, Asn-210, and 228–229 contribute to the substrate site; these read GN and ER. The active-site Proton acceptor is Cys-237. Residue 238 to 239 participates in substrate binding; it reads GT.

This sequence belongs to the diaminopimelate epimerase family. In terms of assembly, homodimer.

The protein localises to the cytoplasm. It catalyses the reaction (2S,6S)-2,6-diaminopimelate = meso-2,6-diaminopimelate. It participates in amino-acid biosynthesis; L-lysine biosynthesis via DAP pathway; DL-2,6-diaminopimelate from LL-2,6-diaminopimelate: step 1/1. In terms of biological role, catalyzes the stereoinversion of LL-2,6-diaminopimelate (L,L-DAP) to meso-diaminopimelate (meso-DAP), a precursor of L-lysine and an essential component of the bacterial peptidoglycan. The polypeptide is Diaminopimelate epimerase (Clostridium acetobutylicum (strain ATCC 824 / DSM 792 / JCM 1419 / IAM 19013 / LMG 5710 / NBRC 13948 / NRRL B-527 / VKM B-1787 / 2291 / W)).